Reading from the N-terminus, the 480-residue chain is Protein nucleotidyltransferase YdiU (480 aa).

G86, G88, R89, K109, D121, G122, R172, and R179 together coordinate ATP. D248 (proton acceptor) is an active-site residue. Residues N249 and D258 each contribute to the Mg(2+) site. D258 is an ATP binding site.

Belongs to the SELO family. Mg(2+) serves as cofactor. Requires Mn(2+) as cofactor.

The catalysed reaction is L-seryl-[protein] + ATP = 3-O-(5'-adenylyl)-L-seryl-[protein] + diphosphate. It carries out the reaction L-threonyl-[protein] + ATP = 3-O-(5'-adenylyl)-L-threonyl-[protein] + diphosphate. It catalyses the reaction L-tyrosyl-[protein] + ATP = O-(5'-adenylyl)-L-tyrosyl-[protein] + diphosphate. The enzyme catalyses L-histidyl-[protein] + UTP = N(tele)-(5'-uridylyl)-L-histidyl-[protein] + diphosphate. The catalysed reaction is L-seryl-[protein] + UTP = O-(5'-uridylyl)-L-seryl-[protein] + diphosphate. It carries out the reaction L-tyrosyl-[protein] + UTP = O-(5'-uridylyl)-L-tyrosyl-[protein] + diphosphate. Functionally, nucleotidyltransferase involved in the post-translational modification of proteins. It can catalyze the addition of adenosine monophosphate (AMP) or uridine monophosphate (UMP) to a protein, resulting in modifications known as AMPylation and UMPylation. The polypeptide is Protein nucleotidyltransferase YdiU (Salmonella agona (strain SL483)).